The following is a 273-amino-acid chain: Large ribosomal subunit protein uL2cz/uL2cy (273 aa).

2 disordered regions span residues 1–23 (MAIH…SQVK) and 223–273 (NPVD…RRSK).

It belongs to the universal ribosomal protein uL2 family. As to quaternary structure, part of the 50S ribosomal subunit.

The protein localises to the plastid. Its subcellular location is the chloroplast. This chain is Large ribosomal subunit protein uL2cz/uL2cy (rpl2-A), found in Oenothera argillicola (Appalachian evening primrose).